The sequence spans 129 residues: Small ribosomal subunit protein uS11 (129 aa).

This sequence belongs to the universal ribosomal protein uS11 family. As to quaternary structure, part of the 30S ribosomal subunit. Interacts with proteins S7 and S18. Binds to IF-3.

Its function is as follows. Located on the platform of the 30S subunit, it bridges several disparate RNA helices of the 16S rRNA. Forms part of the Shine-Dalgarno cleft in the 70S ribosome. The chain is Small ribosomal subunit protein uS11 from Bartonella quintana (strain Toulouse) (Rochalimaea quintana).